The following is a 177-amino-acid chain: Large ribosomal subunit protein uL6 (177 aa).

The protein belongs to the universal ribosomal protein uL6 family. In terms of assembly, part of the 50S ribosomal subunit.

Functionally, this protein binds to the 23S rRNA, and is important in its secondary structure. It is located near the subunit interface in the base of the L7/L12 stalk, and near the tRNA binding site of the peptidyltransferase center. The sequence is that of Large ribosomal subunit protein uL6 from Serratia proteamaculans (strain 568).